Here is a 200-residue protein sequence, read N- to C-terminus: Small ribosomal subunit protein uS4 (200 aa).

The disordered stretch occupies residues 22–42; it reads TGKELEKRPYAPGPHGPNQRK. The region spanning 92–152 is the S4 RNA-binding domain; sequence ARLDNLVYRM…EKSNNLVVVK (61 aa).

The protein belongs to the universal ribosomal protein uS4 family. In terms of assembly, part of the 30S ribosomal subunit. Contacts protein S5. The interaction surface between S4 and S5 is involved in control of translational fidelity.

One of the primary rRNA binding proteins, it binds directly to 16S rRNA where it nucleates assembly of the body of the 30S subunit. In terms of biological role, with S5 and S12 plays an important role in translational accuracy. This chain is Small ribosomal subunit protein uS4, found in Bacillus cereus (strain Q1).